Reading from the N-terminus, the 367-residue chain is Probable neutral protease 2 homolog MCYG_00239 (367 aa).

An N-terminal signal peptide occupies residues 1–19; that stretch reads MQVLVALAALSSLAAPVVG. The propeptide occupies 20-190; that stretch reads FSIPRGVPVS…DGPFTRIDKR (171 aa). Disulfide bonds link Cys198–Cys268, Cys275–Cys293, and Cys307–Cys367. His318 is a binding site for Zn(2+). The active site involves Glu319. Residues His322 and Asp333 each coordinate Zn(2+).

The protein belongs to the peptidase M35 family. The cofactor is Zn(2+).

The protein resides in the secreted. The catalysed reaction is Preferential cleavage of bonds with hydrophobic residues in P1'. Also 3-Asn-|-Gln-4 and 8-Gly-|-Ser-9 bonds in insulin B chain.. Functionally, probable secreted metalloprotease that shows high activities on basic nuclear substrates such as histone and protamine. May be involved in virulence. This chain is Probable neutral protease 2 homolog MCYG_00239, found in Arthroderma otae (strain ATCC MYA-4605 / CBS 113480) (Microsporum canis).